Consider the following 349-residue polypeptide: tRNA N6-adenosine threonylcarbamoyltransferase (349 aa).

Residues histidine 118 and histidine 122 each coordinate Fe cation. Residues 141–145, aspartate 174, glycine 187, and asparagine 280 contribute to the substrate site; that span reads LVSGG. Position 308 (aspartate 308) interacts with Fe cation.

This sequence belongs to the KAE1 / TsaD family. Requires Fe(2+) as cofactor.

It localises to the cytoplasm. It carries out the reaction L-threonylcarbamoyladenylate + adenosine(37) in tRNA = N(6)-L-threonylcarbamoyladenosine(37) in tRNA + AMP + H(+). Functionally, required for the formation of a threonylcarbamoyl group on adenosine at position 37 (t(6)A37) in tRNAs that read codons beginning with adenine. Is involved in the transfer of the threonylcarbamoyl moiety of threonylcarbamoyl-AMP (TC-AMP) to the N6 group of A37, together with TsaE and TsaB. TsaD likely plays a direct catalytic role in this reaction. This chain is tRNA N6-adenosine threonylcarbamoyltransferase, found in Acidovorax sp. (strain JS42).